A 182-amino-acid polypeptide reads, in one-letter code: ATP synthase subunit delta (182 aa).

The protein belongs to the ATPase delta chain family. F-type ATPases have 2 components, F(1) - the catalytic core - and F(0) - the membrane proton channel. F(1) has five subunits: alpha(3), beta(3), gamma(1), delta(1), epsilon(1). F(0) has three main subunits: a(1), b(2) and c(10-14). The alpha and beta chains form an alternating ring which encloses part of the gamma chain. F(1) is attached to F(0) by a central stalk formed by the gamma and epsilon chains, while a peripheral stalk is formed by the delta and b chains.

It is found in the cell inner membrane. Its function is as follows. F(1)F(0) ATP synthase produces ATP from ADP in the presence of a proton or sodium gradient. F-type ATPases consist of two structural domains, F(1) containing the extramembraneous catalytic core and F(0) containing the membrane proton channel, linked together by a central stalk and a peripheral stalk. During catalysis, ATP synthesis in the catalytic domain of F(1) is coupled via a rotary mechanism of the central stalk subunits to proton translocation. In terms of biological role, this protein is part of the stalk that links CF(0) to CF(1). It either transmits conformational changes from CF(0) to CF(1) or is implicated in proton conduction. The protein is ATP synthase subunit delta of Cytophaga hutchinsonii (strain ATCC 33406 / DSM 1761 / CIP 103989 / NBRC 15051 / NCIMB 9469 / D465).